The following is a 433-amino-acid chain: Cell adhesion molecule 2 (433 aa).

Residues 1–24 form the signal peptide; sequence MILQPSALLCLSSLWGVIVQASQG. The Extracellular portion of the chain corresponds to 25–365; the sequence is QFPVTQNVTV…ALPGPVATDH (341 aa). Residues 27–114 form the Ig-like V-type domain; it reads PVTQNVTVVE…SLFTMPVKTS (88 aa). N-linked (GlcNAc...) asparagine glycans are attached at residues Asn31, Asn41, and Asn51. Intrachain disulfides connect Cys44-Cys104, Cys146-Cys203, and Cys248-Cys296. 2 consecutive Ig-like C2-type domains span residues 127–217 and 227–312; these read PHIS…PQIA and PTVR…YVLI. Residues Asn287 and Asn291 are each glycosylated (N-linked (GlcNAc...) asparagine). A helical transmembrane segment spans residues 366–386; it reads ALIGGVVAVVVFVTLCSIILI. The Cytoplasmic portion of the chain corresponds to 387–433; it reads GRYLARHKGTYLTNEAKGAEDAPDADTAIINAEGSQVNAEEKKEYFI.

The protein belongs to the nectin family.

Its subcellular location is the membrane. The chain is Cell adhesion molecule 2 (cadm2) from Xenopus tropicalis (Western clawed frog).